A 216-amino-acid polypeptide reads, in one-letter code: Thiosulfate dehydrogenase electron acceptor (216 aa).

An N-terminal signal peptide occupies residues 1 to 22; that stretch reads MKSIHWPLAGVAALLLSMQAQA. Cytochrome c domains are found at residues 23 to 108 and 118 to 210; these read ADGQ…EAMP and SEAA…ANVG. Heme c is bound by residues Cys-41, Cys-44, His-45, Cys-141, Cys-144, and His-145.

In terms of processing, binds 2 heme c groups covalently per subunit.

In terms of biological role, acts as an electron acceptor for the thiosulfate dehydrogenase TsdA. This Stutzerimonas stutzeri (strain A1501) (Pseudomonas stutzeri) protein is Thiosulfate dehydrogenase electron acceptor (tsdB).